Consider the following 349-residue polypeptide: S-adenosylmethionine:tRNA ribosyltransferase-isomerase (349 aa).

This sequence belongs to the QueA family. Monomer.

The protein resides in the cytoplasm. It carries out the reaction 7-aminomethyl-7-carbaguanosine(34) in tRNA + S-adenosyl-L-methionine = epoxyqueuosine(34) in tRNA + adenine + L-methionine + 2 H(+). It participates in tRNA modification; tRNA-queuosine biosynthesis. In terms of biological role, transfers and isomerizes the ribose moiety from AdoMet to the 7-aminomethyl group of 7-deazaguanine (preQ1-tRNA) to give epoxyqueuosine (oQ-tRNA). This chain is S-adenosylmethionine:tRNA ribosyltransferase-isomerase, found in Pseudomonas fluorescens (strain SBW25).